The chain runs to 259 residues: Gene 2 protein (259 aa).

Basic and acidic residues-rich tracts occupy residues 1–12 and 21–36; these read MPPTELEKKRGE and QKQH…AKRK. The segment at 1-36 is disordered; sequence MPPTELEKKRGEYNQIAIDAQKQHAPTDEKREAKRK.

The sequence is that of Gene 2 protein (2) from Mycobacterium (Mycobacteriophage L5).